Here is a 575-residue protein sequence, read N- to C-terminus: Sulfite reductase [NADPH] hemoprotein beta-component (575 aa).

The [4Fe-4S] cluster site is built by Cys-439, Cys-445, Cys-484, and Cys-488. Position 488 (Cys-488) interacts with siroheme.

This sequence belongs to the nitrite and sulfite reductase 4Fe-4S domain family. Alpha(8)-beta(8). The alpha component is a flavoprotein, the beta component is a hemoprotein. Siroheme is required as a cofactor. It depends on [4Fe-4S] cluster as a cofactor.

It catalyses the reaction hydrogen sulfide + 3 NADP(+) + 3 H2O = sulfite + 3 NADPH + 4 H(+). Its pathway is sulfur metabolism; hydrogen sulfide biosynthesis; hydrogen sulfide from sulfite (NADPH route): step 1/1. In terms of biological role, component of the sulfite reductase complex that catalyzes the 6-electron reduction of sulfite to sulfide. This is one of several activities required for the biosynthesis of L-cysteine from sulfate. The polypeptide is Sulfite reductase [NADPH] hemoprotein beta-component (Blochmanniella pennsylvanica (strain BPEN)).